The chain runs to 158 residues: MNTIAPNLDGKHLRIGIVQARFTNEIGSEMLKVCCRTLQELGVADENITVATVPGALEIPIALMNLASSEKFDALIAIGVVIRGETYHFELVSNESGAGVSRVALDYNIPIANAVLTTENDAQAIERIEEKASDAAKVAVECANLVNLLLEEQFEDEE.

5-amino-6-(D-ribitylamino)uracil-binding positions include Phe22, 56 to 58, and 80 to 82; these read ALE and VVI. 85-86 contacts (2S)-2-hydroxy-3-oxobutyl phosphate; that stretch reads ET. His88 (proton donor) is an active-site residue. Asn113 is a binding site for 5-amino-6-(D-ribitylamino)uracil. Residue Arg127 participates in (2S)-2-hydroxy-3-oxobutyl phosphate binding.

It belongs to the DMRL synthase family.

The catalysed reaction is (2S)-2-hydroxy-3-oxobutyl phosphate + 5-amino-6-(D-ribitylamino)uracil = 6,7-dimethyl-8-(1-D-ribityl)lumazine + phosphate + 2 H2O + H(+). It functions in the pathway cofactor biosynthesis; riboflavin biosynthesis; riboflavin from 2-hydroxy-3-oxobutyl phosphate and 5-amino-6-(D-ribitylamino)uracil: step 1/2. Catalyzes the formation of 6,7-dimethyl-8-ribityllumazine by condensation of 5-amino-6-(D-ribitylamino)uracil with 3,4-dihydroxy-2-butanone 4-phosphate. This is the penultimate step in the biosynthesis of riboflavin. This Neisseria meningitidis serogroup C / serotype 2a (strain ATCC 700532 / DSM 15464 / FAM18) protein is 6,7-dimethyl-8-ribityllumazine synthase.